Consider the following 311-residue polypeptide: Deoxyhypusine hydroxylase (311 aa).

HEAT-like PBS-type repeat units lie at residues 69 to 95 (LKHE…VLEN), 102 to 128 (VRHE…YFKN), 196 to 222 (ERYR…GLDD), 228 to 254 (FKHE…TLKD), and 261 to 287 (VRHE…FLND). Fe cation is bound by residues His-71, Glu-72, His-104, and Glu-105. Residues His-230, Glu-231, His-263, and Glu-264 each contribute to the Fe cation site.

Belongs to the deoxyhypusine hydroxylase family. It depends on Fe(2+) as a cofactor.

The protein resides in the cytoplasm. The protein localises to the nucleus. The enzyme catalyses [eIF5A protein]-deoxyhypusine + AH2 + O2 = [eIF5A protein]-hypusine + A + H2O. Its pathway is protein modification; eIF5A hypusination. Functionally, catalyzes the hydroxylation of the N(6)-(4-aminobutyl)-L-lysine intermediate to form hypusine, an essential post-translational modification only found in mature eIF-5A factor. The polypeptide is Deoxyhypusine hydroxylase (Debaryomyces hansenii (strain ATCC 36239 / CBS 767 / BCRC 21394 / JCM 1990 / NBRC 0083 / IGC 2968) (Yeast)).